We begin with the raw amino-acid sequence, 366 residues long: MKLKIVAVVVTGLLAANVAHAAEVYNKDGNKLDLYGKVTALRYFTDDKRDDGDKTYARLGFKGGTQINDQMIGFGHWEYDFKGYNDEANGSRGNKTRLAYAGLKISEFGSLDYGRNYGVGYDIGSWTDMLPEFGGDTWSQKDVFMTYRTTGLATYRNYDFFGLIEGLNFAAQYQGKNERTDNSHLYGADYTRANGDGFGISSTYVYDGFGIGAVYTKSDRTNAQERAAANPLNASGKNAELWATGIKYDANNIYFAANYDETLNMTTYGDGYISNKAQSFEVVAQYQFDFGLRPSLAYLKSKGRDLGRYADQDMIEYIDVGATYFFNKNMSTYVDYKINLIDESDFTRAVDIRTDNIVATGITYQF.

A signal peptide spans 1–21 (MKLKIVAVVVTGLLAANVAHA).

This sequence belongs to the Gram-negative porin family. Homotrimer. Forms mixed heterotrimers with OmpF and with PhoE; other mixed heterotrimers are also probable.

It localises to the cell outer membrane. Functionally, forms pores that allow passive diffusion of small molecules across the outer membrane. Plays a role in virulence. The protein is Outer membrane porin C 2 of Shigella flexneri serotype 5a (strain M90T).